Consider the following 483-residue polypeptide: ATP-dependent RNA helicase DDX25 (483 aa).

A Q motif motif is present at residues 97–125; sequence KSFEELHLKNELLRGIYAMGFNRPSKIQE. The Helicase ATP-binding domain occupies 130–300; the sequence is MMLADPPQNL…ERIVPDPNII (171 aa). 143-150 provides a ligand contact to ATP; sequence SQSGTGKT. The short motif at 247 to 250 is the DEAD box element; sequence DEAD. A Helicase C-terminal domain is found at 311–478; that stretch reads NIQQFYDQCE…KLNSMDMDEM (168 aa).

Belongs to the DEAD box helicase family. In terms of tissue distribution, an mRNA component of germ plasm. Localizes to the granulo-fibrillar material (GFM) of the mitochondrial cloud in stage I oocytes. Associated, at a low level, with the periphery of mature germinal granules in later stage oocytes. Localizes to the vegetal cortex in stage II oocytes and segregates with germ plasm during early embryogenesis. In adults, expression is restricted to the ovary and, at a lower level, to spermatogonia, spermatocytes and spermatids of the testis.

It is found in the cytoplasm. Its subcellular location is the nucleus. It carries out the reaction ATP + H2O = ADP + phosphate + H(+). Functionally, ATP-dependent RNA helicase. This chain is ATP-dependent RNA helicase DDX25, found in Xenopus laevis (African clawed frog).